We begin with the raw amino-acid sequence, 496 residues long: Aldehyde dehydrogenase 1A1 (496 aa).

2 positions are modified to N6-acetyllysine: Lys-86 and Lys-123. Residues 162 to 165 (IPWN), 188 to 191 (KPAE), 221 to 222 (GP), and 241 to 242 (GS) each bind NAD(+). Position 247 is an N6-acetyllysine (Lys-247). Glu-264 (proton acceptor) is an active-site residue. An NAD(+)-binding site is contributed by 264–266 (ELG). Cys-298 serves as the catalytic Nucleophile. The interval 331–496 (LAPEVNQGPQ…VTVKISQKNS (166 aa)) is mediates interaction with PRMT3. Residue 344–348 (EQYNK) participates in NAD(+) binding. Residues Lys-348 and Lys-362 each carry the N6-acetyllysine modification. 395-397 (EIF) serves as a coordination point for NAD(+). The residue at position 405 (Lys-405) is an N6-acetyllysine. Ser-408 is subject to Phosphoserine. N6-acetyllysine is present on residues Lys-414, Lys-430, and Lys-490.

It belongs to the aldehyde dehydrogenase family. As to quaternary structure, homotetramer. Interacts with PRMT3; the interaction is direct, inhibits ALDH1A1 aldehyde dehydrogenase activity and is independent of the methyltransferase activity of PRMT3. The N-terminus is blocked most probably by acetylation.

Its subcellular location is the cytoplasm. It is found in the cytosol. The protein localises to the cell projection. The protein resides in the axon. It catalyses the reaction an aldehyde + NAD(+) + H2O = a carboxylate + NADH + 2 H(+). The enzyme catalyses all-trans-retinal + NAD(+) + H2O = all-trans-retinoate + NADH + 2 H(+). The catalysed reaction is 9-cis-retinal + NAD(+) + H2O = 9-cis-retinoate + NADH + 2 H(+). It carries out the reaction 11-cis-retinal + NAD(+) + H2O = 11-cis-retinoate + NADH + 2 H(+). It catalyses the reaction 13-cis-retinal + NAD(+) + H2O = 13-cis-retinoate + NADH + 2 H(+). The enzyme catalyses (E)-4-hydroxynon-2-enal + NAD(+) + H2O = (E)-4-hydroxynon-2-enoate + NADH + 2 H(+). The catalysed reaction is malonaldehyde + NAD(+) + H2O = 3-oxopropanoate + NADH + 2 H(+). It carries out the reaction hexanal + NAD(+) + H2O = hexanoate + NADH + 2 H(+). It catalyses the reaction propanal + NAD(+) + H2O = propanoate + NADH + 2 H(+). The enzyme catalyses 3-deoxyglucosone + NAD(+) + H2O = 2-dehydro-3-deoxy-D-gluconate + NADH + 2 H(+). The catalysed reaction is acetaldehyde + NAD(+) + H2O = acetate + NADH + 2 H(+). It carries out the reaction benzaldehyde + NAD(+) + H2O = benzoate + NADH + 2 H(+). It catalyses the reaction 4-aminobutanal + NAD(+) + H2O = 4-aminobutanoate + NADH + 2 H(+). It participates in cofactor metabolism; retinol metabolism. Cytosolic dehydrogenase that catalyzes the irreversible oxidation of a wide range of aldehydes to their corresponding carboxylic acid. Functions downstream of retinol dehydrogenases and catalyzes the oxidation of retinaldehyde into retinoic acid, the second step in the oxidation of retinol/vitamin A into retinoic acid. This pathway is crucial to control the levels of retinol and retinoic acid, two important molecules which excess can be teratogenic and cytotoxic. Also oxidizes aldehydes resulting from lipid peroxidation like (E)-4-hydroxynon-2-enal/HNE, malonaldehyde and hexanal that form protein adducts and are highly cytotoxic. By participating for instance to the clearance of (E)-4-hydroxynon-2-enal/HNE in the lens epithelium prevents the formation of HNE-protein adducts and lens opacification. Functions also downstream of fructosamine-3-kinase in the fructosamine degradation pathway by catalyzing the oxidation of 3-deoxyglucosone, the carbohydrate product of fructosamine 3-phosphate decomposition, which is itself a potent glycating agent that may react with lysine and arginine side-chains of proteins. Also has an aminobutyraldehyde dehydrogenase activity and is probably part of an alternative pathway for the biosynthesis of GABA/4-aminobutanoate in midbrain, thereby playing a role in GABAergic synaptic transmission. The sequence is that of Aldehyde dehydrogenase 1A1 from Oryctolagus cuniculus (Rabbit).